The primary structure comprises 946 residues: Bifunctional lysine-specific demethylase and histidyl-hydroxylase NO66 (946 aa).

Positions 14-435 (YRGSATSKNY…TSAASKKNTV (422 aa)) are disordered. 2 stretches are compositionally biased toward polar residues: residues 17–28 (SATSKNYVQKGT) and 37–46 (AKNNNRNLAS). The span at 59 to 73 (SGSYSDGDNGSSSSS) shows a compositional bias: low complexity. Positions 99 to 110 (TLNNHSSQSSPE) are enriched in polar residues. The span at 117-128 (ESLKRRNDEAEG) shows a compositional bias: basic and acidic residues. Polar residues predominate over residues 169–186 (TLNSHSSQSSPETPANTR). The segment covering 187–198 (ESLKRRTDEAEG) has biased composition (basic and acidic residues). A compositionally biased stretch (polar residues) spans 239–256 (TLNSHSYQSSPETPANTR). The span at 257 to 268 (ESLKRRTDEAEG) shows a compositional bias: basic and acidic residues. Residue T309 is modified to Phosphothreonine. A compositionally biased stretch (polar residues) spans 309-327 (TLNSHSSQSSPETPANTRE). The span at 328–338 (SLNRRNYEAEG) shows a compositional bias: basic and acidic residues. A Phosphoserine modification is found at S339. The span at 379–397 (TLNSHSSQSSPETPANTRE) shows a compositional bias: polar residues. The span at 398–408 (SLNRRNYEAEG) shows a compositional bias: basic and acidic residues. The segment covering 416-433 (RTSSTPVGQSTSAASKKN) has biased composition (polar residues). The 137-residue stretch at 606-742 (NPSSYLVQLR…NLMEKLMPLV (137 aa)) folds into the JmjC domain. Positions 646, 648, and 708 each coordinate Fe cation.

Belongs to the ROX family. NO66 subfamily. Fe(2+) is required as a cofactor.

The protein resides in the nucleus. The enzyme catalyses N(6),N(6)-dimethyl-L-lysyl(36)-[histone H3] + 2 2-oxoglutarate + 2 O2 = L-lysyl(36)-[histone H3] + 2 formaldehyde + 2 succinate + 2 CO2. Its function is as follows. Oxygenase that can act as both a histone lysine demethylase and a ribosomal histidine hydroxylase. Specifically demethylates 'Lys-4' (H3K4me) and 'Lys-36' (H3K36me) of histone H3, thereby playing a central role in histone code. The chain is Bifunctional lysine-specific demethylase and histidyl-hydroxylase NO66 from Drosophila pseudoobscura pseudoobscura (Fruit fly).